The primary structure comprises 269 residues: Cytochrome c oxidase subunit 3 (269 aa).

The Mitochondrial matrix segment spans residues 1 to 22 (MTNLIRSNFQDHPFHLVSPSPW). The helical transmembrane segment at 23 to 41 (PLNTSVCLLNLTTTGALSM) threads the bilayer. The Mitochondrial intermembrane portion of the chain corresponds to 42-48 (HNFNNIH). A helical transmembrane segment spans residues 49-73 (YLYYIALIGLVSAMFLWFRDIISEG). Residues 74–80 (TFLGDHT) are Mitochondrial matrix-facing. Residues 81–114 (LAVQRGLNLGIILFIVSEALFFLAIFWAFFHSAL) traverse the membrane as a helical segment. The Mitochondrial intermembrane portion of the chain corresponds to 115–137 (TPTVELGAQWPPIGIEPVNPFEL). Residues 138-161 (PLLNTVILLSSGATITYAHHALIK) form a helical membrane-spanning segment. Topologically, residues 162–164 (GER) are mitochondrial matrix. A helical membrane pass occupies residues 165–188 (EGALYGSIATILLAIIFTGFQGVE). The Mitochondrial intermembrane portion of the chain corresponds to 189-201 (YSVSSFTISDGAF). A helical transmembrane segment spans residues 202-230 (GTCFFFSTGFHGIHVIIGTIFLAVALWRI). The Mitochondrial matrix segment spans residues 231 to 248 (FAYHLTDNHHVGFEGGIL). A helical transmembrane segment spans residues 249-265 (YWHFVDVVWLFLYISVY). Residues 266–269 (YWGS) lie on the Mitochondrial intermembrane side of the membrane.

Belongs to the cytochrome c oxidase subunit 3 family. In terms of assembly, component of the cytochrome c oxidase (complex IV, CIV), a multisubunit enzyme composed of 11 subunits. The complex is composed of a catalytic core of 3 subunits Cox1, Cox2 and Cox3, encoded in the mitochondrial DNA, and 8 supernumerary subunits Cox4, Cox5a/Cox5, Cox6, Cox7, Cox8, Cox7a/Cox9, Cox6b/Cox12 and Cox6a/Cox13, which are encoded in the nuclear genome. The complex exists as a monomer or a dimer and forms respiratory supercomplexes (SCs) in the inner mitochondrial membrane with NADH-ubiquinone oxidoreductase (complex I, CI) and ubiquinol-cytochrome c oxidoreductase (cytochrome b-c1 complex, complex III, CIII), resulting in various different assemblies (supercomplexes I(1)IV(1), I(1)III(3)IV(2), III(2)IV(1) and III(2)IV(2) as well as larger supercomplexes of compositions like I(1)III(2)IV(5-6)).

The protein localises to the mitochondrion inner membrane. The enzyme catalyses 4 Fe(II)-[cytochrome c] + O2 + 8 H(+)(in) = 4 Fe(III)-[cytochrome c] + 2 H2O + 4 H(+)(out). In terms of biological role, component of the cytochrome c oxidase, the last enzyme in the mitochondrial electron transport chain which drives oxidative phosphorylation. The respiratory chain contains 3 multisubunit complexes succinate dehydrogenase (complex II, CII), ubiquinol-cytochrome c oxidoreductase (cytochrome b-c1 complex, complex III, CIII) and cytochrome c oxidase (complex IV, CIV), that cooperate to transfer electrons derived from NADH and succinate to molecular oxygen, creating an electrochemical gradient over the inner membrane that drives transmembrane transport and the ATP synthase. Cytochrome c oxidase is the component of the respiratory chain that catalyzes the reduction of oxygen to water. Electrons originating from reduced cytochrome c in the intermembrane space (IMS) are transferred via the dinuclear copper A center (CU(A)) of Cox2 and heme A of Cox1 to the active site in Cox1, a binuclear center (BNC) formed by heme A3 and copper B (CU(B)). The BNC reduces molecular oxygen to 2 water molecules using 4 electrons from cytochrome c in the IMS and 4 protons from the mitochondrial matrix. The polypeptide is Cytochrome c oxidase subunit 3 (cox-3) (Neurospora crassa (strain ATCC 24698 / 74-OR23-1A / CBS 708.71 / DSM 1257 / FGSC 987)).